The following is a 319-amino-acid chain: Lambda-crystallin homolog (319 aa).

N-acetylalanine is present on Ala2. Ser3 carries the post-translational modification Phosphoserine. Residues 16–17, Asp36, Glu97, and Lys102 each bind NAD(+); that span reads LI.

Belongs to the 3-hydroxyacyl-CoA dehydrogenase family. In terms of assembly, homodimer.

The protein resides in the cytoplasm. It catalyses the reaction L-gulonate + NAD(+) = 3-dehydro-L-gulonate + NADH + H(+). With respect to regulation, inhibited by malonate. Has high L-gulonate 3-dehydrogenase activity. It also exhibits low dehydrogenase activity toward L-3-hydroxybutyrate (HBA) and L-threonate. The protein is Lambda-crystallin homolog (Cryl1) of Rattus norvegicus (Rat).